The primary structure comprises 147 residues: Large ribosomal subunit protein uL13 (147 aa).

This sequence belongs to the universal ribosomal protein uL13 family. In terms of assembly, part of the 50S ribosomal subunit.

In terms of biological role, this protein is one of the early assembly proteins of the 50S ribosomal subunit, although it is not seen to bind rRNA by itself. It is important during the early stages of 50S assembly. This is Large ribosomal subunit protein uL13 from Salinispora arenicola (strain CNS-205).